Here is a 444-residue protein sequence, read N- to C-terminus: Tubulin beta chain (444 aa).

GTP contacts are provided by Gln-11, Glu-69, Ser-138, Gly-142, Thr-143, Gly-144, Asn-204, and Asn-226. Glu-69 lines the Mg(2+) pocket.

It belongs to the tubulin family. In terms of assembly, dimer of alpha and beta chains. A typical microtubule is a hollow water-filled tube with an outer diameter of 25 nm and an inner diameter of 15 nM. Alpha-beta heterodimers associate head-to-tail to form protofilaments running lengthwise along the microtubule wall with the beta-tubulin subunit facing the microtubule plus end conferring a structural polarity. Microtubules usually have 13 protofilaments but different protofilament numbers can be found in some organisms and specialized cells. Requires Mg(2+) as cofactor.

The protein localises to the cytoplasm. It localises to the cytoskeleton. Tubulin is the major constituent of microtubules, a cylinder consisting of laterally associated linear protofilaments composed of alpha- and beta-tubulin heterodimers. Microtubules grow by the addition of GTP-tubulin dimers to the microtubule end, where a stabilizing cap forms. Below the cap, tubulin dimers are in GDP-bound state, owing to GTPase activity of alpha-tubulin. In Phytophthora cinnamomi (Cinnamon fungus), this protein is Tubulin beta chain.